The primary structure comprises 238 residues: Flagellar L-ring protein (238 aa).

The N-terminal stretch at 1-16 (MNKAILAVAMVLLLAG) is a signal peptide. Cys-17 is lipidated: N-palmitoyl cysteine. A lipid anchor (S-diacylglycerol cysteine) is attached at Cys-17.

Belongs to the FlgH family. As to quaternary structure, the basal body constitutes a major portion of the flagellar organelle and consists of four rings (L,P,S, and M) mounted on a central rod.

The protein localises to the cell outer membrane. It is found in the bacterial flagellum basal body. In terms of biological role, assembles around the rod to form the L-ring and probably protects the motor/basal body from shearing forces during rotation. This chain is Flagellar L-ring protein, found in Brucella abortus (strain 2308).